The following is a 673-amino-acid chain: RAS guanyl-releasing protein 4 (673 aa).

Composition is skewed to basic residues over residues 1-10 (MNRKDSKRKS) and 20-32 (GRGR…RHKT). Disordered stretches follow at residues 1–34 (MNRK…KTCP) and 162–188 (QSLG…PGLG). The N-terminal Ras-GEF domain occupies 49–172 (GMLNEGGCSE…SLGDFSSRLS (124 aa)). The region spanning 201–432 (ETGELAEHLT…YELSYAREPR (232 aa)) is the Ras-GEF domain. The region spanning 466-501 (HVEQLVESVFKNYDPDGRGTISQEDFERLSGNFPFA) is the EF-hand domain. The Phorbol-ester/DAG-type zinc finger occupies 540-590 (LHTFQEVTFRKPTFCNSCSGFLWGVTKQGYRCRDCGLCCHRHCRDQVKVEC). Disordered stretches follow at residues 593 to 618 (RPGA…ASCG) and 638 to 673 (RHAW…KLNS). The span at 603–612 (PEAPVPPTPV) shows a compositional bias: pro residues.

Belongs to the RASGRP family.

The protein localises to the cytoplasm. It is found in the cell membrane. Its function is as follows. Functions as a cation- and diacylglycerol (DAG)-regulated nucleotide exchange factor activating Ras through the exchange of bound GDP for GTP. In neutrophils, participates in a phospholipase C-activating N-formyl peptide-activated GPCR (G protein-coupled receptor) signaling pathway by promoting Ras-mediated activation of PIK3CG/PI3Kgamma to promote neutrophil functional responses. In CD117(+) dendritic cells and mast cells, participates in an lipopolysaccharide (LPS)-activated signaling pathway that stimulates the production of interferon-gamma and other pro-inflammatory cytokines by natural killer (NK) cells. May function in mast cell differentiation. Does not appear to be required for the development of B-cells, DC-cells, T-cells, or NK-cells. This Bos taurus (Bovine) protein is RAS guanyl-releasing protein 4 (RASGRP4).